The chain runs to 137 residues: MLSPKRTKFRKPHRGRFRGTATRGNKIVFGEYALQALEPVWLTSRQIEATRRSVTRFVKRTGKLWIRVFPDKSISCKPPETRMGAGKGAPDYWVAVIKPGHILFEIGGVSETLAYNAFKNASYKLPIKTKFISKEFQ.

It belongs to the universal ribosomal protein uL16 family. In terms of assembly, part of the 50S ribosomal subunit.

The protein localises to the plastid. The protein resides in the chloroplast. The polypeptide is Large ribosomal subunit protein uL16c (Rhodomonas salina (Cryptomonas salina)).